Here is a 110-residue protein sequence, read N- to C-terminus: Flagellar hook-basal body complex protein FliE (110 aa).

This sequence belongs to the FliE family.

It is found in the bacterial flagellum basal body. This is Flagellar hook-basal body complex protein FliE from Pseudomonas putida (strain GB-1).